The following is a 463-amino-acid chain: Digalactosyldiacylglycerol synthase 2, chloroplastic (463 aa).

The first 22 residues, methionine 1–alanine 22, serve as a signal peptide directing secretion.

It belongs to the glycosyltransferase group 1 family. Glycosyltransferase 4 subfamily. As to expression, high expression in nodules infected cells, and low in nodule and root vascular tissue.

The protein resides in the plastid. The protein localises to the chloroplast outer membrane. It is found in the plastid outer membrane. It carries out the reaction a 1,2-diacyl-3-O-(beta-D-galactosyl)-sn-glycerol + UDP-alpha-D-galactose = a 1,2-diacyl-3-O-[alpha-D-galactosyl-(1-&gt;6)-beta-D-galactosyl]-sn-glycerol + UDP + H(+). Its function is as follows. Involved in the synthesis of diacylglycerol galactolipids that are specifically found in thylakoid and in nodule peribacteroid membranes. Specific for alpha-glycosidic linkages. In Lotus japonicus (Lotus corniculatus var. japonicus), this protein is Digalactosyldiacylglycerol synthase 2, chloroplastic.